Here is a 455-residue protein sequence, read N- to C-terminus: Anthocyanidin 3-O-glucosyltransferase (455 aa).

The Proton acceptor role is filled by His-18. His-18 lines the an anthocyanidin pocket. Asp-118 serves as the catalytic Charge relay. Thr-139 is a UDP-alpha-D-glucose binding site. Position 148 (His-148) interacts with an anthocyanidin. Residues Ala-336, Gln-338, His-353, Trp-356, Ser-358, and Glu-361 each contribute to the UDP-alpha-D-glucose site. Gly-376 contacts an anthocyanidin. 2 residues coordinate UDP-alpha-D-glucose: Asp-377 and Gln-378.

This sequence belongs to the UDP-glycosyltransferase family.

It carries out the reaction an anthocyanidin + UDP-alpha-D-glucose + H(+) = an anthocyanidin 3-O-beta-D-glucoside + UDP. It participates in pigment biosynthesis; anthocyanin biosynthesis. Functionally, in the presence of other necessary color factors, this glycosylation reaction allows the accumulation of anthocyanin pigments. The polypeptide is Anthocyanidin 3-O-glucosyltransferase (BZ1) (Hordeum vulgare (Barley)).